A 115-amino-acid chain; its full sequence is MLRLGASVGVHQGSRILFSDFADGGQMWTGNGPREYRLDVTFPEPFTRTPAVTVGLSMWDMDHKTNSRMDIGAENITPQGFQIVFKTWGDTRIARVRADWLAIGSVRDDEDWEIE.

The protein is ATP synthase subunits region ORF 7 of Fuscovulum blasticum (Rhodobacter blasticus).